The sequence spans 237 residues: uncharacterized protein (237 aa).

This is an uncharacterized protein from Schizosaccharomyces pombe (strain 972 / ATCC 24843) (Fission yeast).